Consider the following 615-residue polypeptide: Dihydroxy-acid dehydratase (615 aa).

Position 81 (Asp-81) interacts with Mg(2+). Cys-122 contacts [2Fe-2S] cluster. Mg(2+) is bound by residues Asp-123 and Lys-124. N6-carboxylysine is present on Lys-124. Residue Cys-193 coordinates [2Fe-2S] cluster. Glu-489 is a Mg(2+) binding site. Ser-515 functions as the Proton acceptor in the catalytic mechanism.

Belongs to the IlvD/Edd family. In terms of assembly, homodimer. The cofactor is [2Fe-2S] cluster. Requires Mg(2+) as cofactor.

It carries out the reaction (2R)-2,3-dihydroxy-3-methylbutanoate = 3-methyl-2-oxobutanoate + H2O. The catalysed reaction is (2R,3R)-2,3-dihydroxy-3-methylpentanoate = (S)-3-methyl-2-oxopentanoate + H2O. Its pathway is amino-acid biosynthesis; L-isoleucine biosynthesis; L-isoleucine from 2-oxobutanoate: step 3/4. It functions in the pathway amino-acid biosynthesis; L-valine biosynthesis; L-valine from pyruvate: step 3/4. In terms of biological role, functions in the biosynthesis of branched-chain amino acids. Catalyzes the dehydration of (2R,3R)-2,3-dihydroxy-3-methylpentanoate (2,3-dihydroxy-3-methylvalerate) into 2-oxo-3-methylpentanoate (2-oxo-3-methylvalerate) and of (2R)-2,3-dihydroxy-3-methylbutanoate (2,3-dihydroxyisovalerate) into 2-oxo-3-methylbutanoate (2-oxoisovalerate), the penultimate precursor to L-isoleucine and L-valine, respectively. The polypeptide is Dihydroxy-acid dehydratase (Pseudomonas savastanoi pv. phaseolicola (strain 1448A / Race 6) (Pseudomonas syringae pv. phaseolicola (strain 1448A / Race 6))).